The chain runs to 364 residues: Chorismate synthase (364 aa).

Arg48 provides a ligand contact to NADP(+). FMN-binding positions include 131 to 133, 243 to 244, Gly288, 303 to 307, and Arg329; these read RSS, NA, and KPTSS.

The protein belongs to the chorismate synthase family. Homotetramer. The cofactor is FMNH2.

The catalysed reaction is 5-O-(1-carboxyvinyl)-3-phosphoshikimate = chorismate + phosphate. The protein operates within metabolic intermediate biosynthesis; chorismate biosynthesis; chorismate from D-erythrose 4-phosphate and phosphoenolpyruvate: step 7/7. In terms of biological role, catalyzes the anti-1,4-elimination of the C-3 phosphate and the C-6 proR hydrogen from 5-enolpyruvylshikimate-3-phosphate (EPSP) to yield chorismate, which is the branch point compound that serves as the starting substrate for the three terminal pathways of aromatic amino acid biosynthesis. This reaction introduces a second double bond into the aromatic ring system. This is Chorismate synthase from Brucella abortus (strain S19).